Reading from the N-terminus, the 51-residue chain is Large ribosomal subunit protein eL39 (51 aa).

It belongs to the eukaryotic ribosomal protein eL39 family.

The chain is Large ribosomal subunit protein eL39 (RpL39) from Drosophila melanogaster (Fruit fly).